The primary structure comprises 277 residues: Protein OPG166 (277 aa).

2 N-linked (GlcNAc...) asparagine; by host glycosylation sites follow: Asn29 and Asn58. A run of 5 helical transmembrane segments spans residues 124-144 (TMLM…EITY), 156-176 (GILQ…AFLF), 186-206 (IIGL…KVFS), 219-239 (LIIY…GLSL), and 247-267 (LLLS…LFLV).

It belongs to the orthopoxvirus OPG166 protein family.

It localises to the host membrane. Its function is as follows. Promotes, when overexpressed, the influx of extracellular Ca(2+), leading to membrane permeability and host cell necrosis. This is Protein OPG166 (OPG166) from Vaccinia virus (strain Copenhagen) (VACV).